The following is a 357-amino-acid chain: Actin, cytoplasmic (357 aa).

It belongs to the actin family. Post-translationally, met-1 may be removed after translation.

It localises to the cytoplasm. Its subcellular location is the cytoskeleton. It catalyses the reaction ATP + H2O = ADP + phosphate + H(+). Actins are highly conserved proteins that are involved in various types of cell motility and are ubiquitously expressed in all eukaryotic cells. The sequence is that of Actin, cytoplasmic from Oxytricha fallax.